Here is a 201-residue protein sequence, read N- to C-terminus: MASVDLAKVGTILVKNALSGEMVELKSLWKEKTTVLLFLRRFGCQICRWIAKDIGKLKASCDAHQIRLVGIGPEEVGLKEFLEGNFFNGELYIDESKESYKTLGFKRYSALSVIPAALGKKVRDIVTKANADGVQGNFSGDLLQSGGMLIVSKGGEKVLLHFIQDSPGDYVPLESIVQTLGITANVTESQRPQCNDEVCTR.

The protein belongs to the peroxiredoxin-like PRXL2 family. Prostamide/prostaglandin F synthase subfamily.

Its subcellular location is the cytoplasm. It localises to the cytosol. The enzyme catalyses prostaglandin H2 + [thioredoxin]-dithiol = prostaglandin F2alpha + [thioredoxin]-disulfide. The catalysed reaction is prostamide F2alpha + [thioredoxin]-disulfide = prostamide H2 + [thioredoxin]-dithiol. In terms of biological role, catalyzes the reduction of prostaglandin-ethanolamide H(2) (prostamide H(2)) to prostamide F(2alpha) with NADPH as proton donor. Also able to reduce prostaglandin H(2) to prostaglandin F(2alpha). In Xenopus tropicalis (Western clawed frog), this protein is Prostamide/prostaglandin F synthase (prxl2b).